A 431-amino-acid chain; its full sequence is Glucose-1-phosphate adenylyltransferase (431 aa).

A beta-D-fructose 1,6-bisphosphate-binding site is contributed by K39. AMP-binding residues include R40, H46, and R52. Y114 is a binding site for alpha-D-glucose 1-phosphate. R130 provides a ligand contact to AMP. Alpha-D-glucose 1-phosphate-binding positions include G179, 194 to 195 (EK), and S212. R386 is a binding site for AMP. Residue 429–431 (QER) participates in beta-D-fructose 1,6-bisphosphate binding.

This sequence belongs to the bacterial/plant glucose-1-phosphate adenylyltransferase family. As to quaternary structure, homotetramer.

It carries out the reaction alpha-D-glucose 1-phosphate + ATP + H(+) = ADP-alpha-D-glucose + diphosphate. It functions in the pathway glycan biosynthesis; glycogen biosynthesis. With respect to regulation, allosterically activated by fructose-1,6-bisphosphate (F16BP) and inhibited by AMP. In terms of biological role, involved in the biosynthesis of ADP-glucose, a building block required for the elongation reactions to produce glycogen. Catalyzes the reaction between ATP and alpha-D-glucose 1-phosphate (G1P) to produce pyrophosphate and ADP-Glc. The chain is Glucose-1-phosphate adenylyltransferase from Klebsiella pneumoniae (strain 342).